The primary structure comprises 606 residues: MKVLGLISGGKDSCFNLMHCVSLGHEVVALANLHPEDGKDEIDSFMYQSVGHDVIPLYAECFDLPLYREKIGGQSINQNLDYQFTEKDETEDLYRLIKRVLTNHPDLEAVSTGAILSTYQRTRVENVCKRLGLKSLSFLWQKDQEKLLNDMVVSGLNAILIKVAAIGLTRKDLGKSLAEMQDKLLTLNKKFELHPCGEGGEYETLVLDCPLFKKRIVLTDKEVVEHSSGEVCYLKVKACVKDKPEWQPISLKSELVPNEELLGEEYSHIYHTISKKYELIDDQEETPTSLIPIPLRESAFQQKKGSFLVLGNVVATKGSYNTFQGEAESAINNLNELLGTYGYSNKNVYFVTVILSSMSKFAEFNSVYNKYFDFTNPPSRSCVAAPLASEYRIVMSCIVGDVTEKRALHVQGQSYWAPANIGPYSQSICANGVVFISGQIGLIPSVMELKLHDKIFEMVLALQHANRVAKAMRVGSLIACLAYVCDSRDADCVVKIWSEYTKNTGESSPVLVALVDALPRNASVEWQLLYNDSSCDVPLLSSLVTNQTLFGSDTAWDVALLNQNGLRMESSFIHHEHPSAYAIVLNNAFPNSQLLHVRYTARDQNV.

This sequence in the N-terminal section; belongs to the Diphthine--ammonia ligase family. It in the C-terminal section; belongs to the RutC family.

The protein localises to the cytoplasm. Its subcellular location is the nucleus. It catalyses the reaction diphthine-[translation elongation factor 2] + NH4(+) + ATP = diphthamide-[translation elongation factor 2] + AMP + diphosphate + H(+). It participates in protein modification; peptidyl-diphthamide biosynthesis. Amidase that catalyzes the last step of diphthamide biosynthesis using ammonium and ATP. Diphthamide biosynthesis consists in the conversion of an L-histidine residue in the translation elongation factor eEF-2 (eft201 or eft202) to diphthamide. Has a role in meiosis. The chain is Diphthine--ammonia ligase (mug71) from Schizosaccharomyces pombe (strain 972 / ATCC 24843) (Fission yeast).